The sequence spans 264 residues: 3-methyl-2-oxobutanoate hydroxymethyltransferase (264 aa).

Residues aspartate 45 and aspartate 84 each contribute to the Mg(2+) site. Residues 45-46, aspartate 84, and lysine 112 contribute to the 3-methyl-2-oxobutanoate site; that span reads DS. Glutamate 114 contributes to the Mg(2+) binding site. Catalysis depends on glutamate 181, which acts as the Proton acceptor.

This sequence belongs to the PanB family. In terms of assembly, homodecamer; pentamer of dimers. Requires Mg(2+) as cofactor.

It localises to the cytoplasm. It carries out the reaction 3-methyl-2-oxobutanoate + (6R)-5,10-methylene-5,6,7,8-tetrahydrofolate + H2O = 2-dehydropantoate + (6S)-5,6,7,8-tetrahydrofolate. Its pathway is cofactor biosynthesis; (R)-pantothenate biosynthesis; (R)-pantoate from 3-methyl-2-oxobutanoate: step 1/2. Functionally, catalyzes the reversible reaction in which hydroxymethyl group from 5,10-methylenetetrahydrofolate is transferred onto alpha-ketoisovalerate to form ketopantoate. This is 3-methyl-2-oxobutanoate hydroxymethyltransferase from Pectobacterium atrosepticum (strain SCRI 1043 / ATCC BAA-672) (Erwinia carotovora subsp. atroseptica).